The primary structure comprises 250 residues: MRKPIIAGNWKMNLTLKDAVAFAEEVKGTVPASSKVDAAVCAPSVFLAHLTEATAGTDLKIGAQNMYDQESGAFTGEISPVMLKELGVTYVVLGHSERREYFGETDAFINSKTKKAFEHGLVPIVCVGETLEEREGGKFESVIREQTTNSLKGLTVDQVKNLVVAYEPVWAIGTGKSATEQDAQDSCKFVRDVIAAEFGTEAAEAVRIQYGGSVKPDNIKEYMAQPDIDGALVGGASLETGSFLKLLEAI.

Residue 9 to 11 participates in substrate binding; sequence NWK. His-95 (electrophile) is an active-site residue. Glu-167 serves as the catalytic Proton acceptor. Substrate-binding positions include Gly-173, Ser-213, and 234-235; that span reads GG.

Belongs to the triosephosphate isomerase family. As to quaternary structure, homodimer.

The protein localises to the cytoplasm. It catalyses the reaction D-glyceraldehyde 3-phosphate = dihydroxyacetone phosphate. Its pathway is carbohydrate biosynthesis; gluconeogenesis. It functions in the pathway carbohydrate degradation; glycolysis; D-glyceraldehyde 3-phosphate from glycerone phosphate: step 1/1. Functionally, involved in the gluconeogenesis. Catalyzes stereospecifically the conversion of dihydroxyacetone phosphate (DHAP) to D-glyceraldehyde-3-phosphate (G3P). The chain is Triosephosphate isomerase from Exiguobacterium sibiricum (strain DSM 17290 / CCUG 55495 / CIP 109462 / JCM 13490 / 255-15).